A 941-amino-acid chain; its full sequence is Endoplasmic reticulum aminopeptidase 1 (941 aa).

Residue methionine 1 is a topological domain, cytoplasmic. Residues 2-21 (VFLPLKWSLATMSFLLSSLL) traverse the membrane as a helical; Signal-anchor for type II membrane protein segment. Residues 22–941 (ALLTVSTPSW…WLQSEKLERM (920 aa)) are Lumenal-facing. N-linked (GlcNAc...) asparagine glycans are attached at residues asparagine 70 and asparagine 154. Residues glutamate 183 and 317-321 (GAMEN) contribute to the substrate site. Residue histidine 353 participates in Zn(2+) binding. Glutamate 354 acts as the Proton acceptor in catalysis. Histidine 357 and glutamate 376 together coordinate Zn(2+). 2 disulfides stabilise this stretch: cysteine 404-cysteine 443 and cysteine 736-cysteine 743. A glycan (N-linked (GlcNAc...) asparagine) is linked at asparagine 414. N-linked (GlcNAc...) asparagine glycans are attached at residues asparagine 760 and asparagine 901.

The protein belongs to the peptidase M1 family. In terms of assembly, monomer. May also exist as a heterodimer; with ERAP2. Interacts with RBMX. Zn(2+) is required as a cofactor. In terms of processing, N-glycosylated. In terms of tissue distribution, ubiquitous.

The protein resides in the endoplasmic reticulum membrane. In terms of biological role, aminopeptidase that plays a central role in peptide trimming, a step required for the generation of most HLA class I-binding peptides. Peptide trimming is essential to customize longer precursor peptides to fit them to the correct length required for presentation on MHC class I molecules. Strongly prefers substrates 9-16 residues long. Rapidly degrades 13-mer to a 9-mer and then stops. Preferentially hydrolyzes the residue Leu and peptides with a hydrophobic C-terminus, while it has weak activity toward peptides with charged C-terminus. May play a role in the inactivation of peptide hormones. May be involved in the regulation of blood pressure through the inactivation of angiotensin II and/or the generation of bradykinin in the kidney. In Homo sapiens (Human), this protein is Endoplasmic reticulum aminopeptidase 1 (ERAP1).